The following is a 552-amino-acid chain: Phosphoglucomutase (552 aa).

Residue Ser143 is the Phosphoserine intermediate of the active site. Residues Ser143, Asp295, Asp297, and Asp299 each coordinate Mg(2+).

The protein belongs to the phosphohexose mutase family. Mg(2+) serves as cofactor.

The catalysed reaction is alpha-D-glucose 1-phosphate = alpha-D-glucose 6-phosphate. It participates in glycolipid metabolism; diglucosyl-diacylglycerol biosynthesis. Functionally, catalyzes the interconversion between glucose-6-phosphate and alpha-glucose-1-phosphate. This is the first step in the biosynthesis of diglucosyl-diacylglycerol (Glc2-DAG), i.e. the predominant glycolipid found in the S.aureus membrane, which is also used as a membrane anchor for lipoteichoic acid (LTA). In Staphylococcus aureus (strain USA300), this protein is Phosphoglucomutase (pgcA).